The following is a 3102-amino-acid chain: Laminin subunit alpha lam-3 (3102 aa).

The first 16 residues, 1-16 (MRLWLGLLAVSNIALG), serve as a signal peptide directing secretion. 3 N-linked (GlcNAc...) asparagine glycosylation sites follow: N19, N135, and N237. One can recognise a Laminin N-terminal domain in the interval 44–295 (SERGLFPNIF…SISDISIGGQ (252 aa)). 16 cysteine pairs are disulfide-bonded: C296–C305, C298–C316, C318–C327, C330–C350, C353–C362, C355–C387, C390–C399, C402–C420, C423–C435, C425–C451, C453–C462, C465–C475, C478–C491, C480–C496, C498–C507, and C510–C525. Laminin EGF-like domains follow at residues 296-352 (CICY…VCQQ), 353-422 (CQCF…ACRT), 423-477 (CECD…TCEP), and 478-527 (CPCN…GCQP). The Laminin IV type A 1 domain maps to 548-740 (INNIGWHLTD…QDTLMGGVEV (193 aa)). Cystine bridges form between C774/C783, C776/C790, C793/C802, C805/C822, C825/C838, C827/C858, C861/C870, C873/C886, C889/C903, C891/C910, C913/C922, C925/C938, C941/C953, C943/C960, C962/C971, C974/C985, C988/C1000, C990/C1007, C1009/C1018, C1021/C1033, C1036/C1049, C1038/C1056, C1058/C1067, C1070/C1083, C1086/C1098, C1088/C1105, C1107/C1116, C1119/C1131, C1134/C1144, C1137/C1151, and C1153/C1162. 10 consecutive Laminin EGF-like domains span residues 774 to 824 (CDCH…ACEQ), 825 to 888 (CECP…KCIE), 889 to 940 (CTCN…TCKP), 941 to 987 (CGCH…GCPA), 988 to 1035 (CDCN…GCQF), 1036 to 1085 (CHCN…GCED), 1086 to 1133 (CGCD…GCTE), 1134 to 1180 (CEPC…GCKL), 1181 to 1226 (CDCS…TCEP), and 1227 to 1283 (CGCN…GCTE). N796 carries N-linked (GlcNAc...) asparagine glycosylation. An N-linked (GlcNAc...) asparagine glycan is attached at N991. An N-linked (GlcNAc...) asparagine glycan is attached at N1027. N-linked (GlcNAc...) asparagine glycosylation is present at N1076. N1164 carries an N-linked (GlcNAc...) asparagine glycan. 9 disulfides stabilise this stretch: C1165-C1178, C1181-C1193, C1183-C1200, C1202-C1211, C1214-C1224, C1227-C1246, C1229-C1252, C1254-C1263, and C1266-C1281. Residue N1288 is glycosylated (N-linked (GlcNAc...) asparagine). One can recognise a Laminin IV type A 2 domain in the interval 1295 to 1496 (QSDLVWQQMY…STTKAIGVEK (202 aa)). Disulfide bonds link C1540/C1549, C1542/C1556, C1559/C1568, C1571/C1587, C1590/C1603, C1592/C1614, C1617/C1626, C1629/C1644, C1647/C1659, C1649/C1666, C1668/C1677, and C1680/C1691. Laminin EGF-like domains follow at residues 1540–1589 (CSCH…ACTK), 1590–1646 (CACP…TCSP), and 1647–1693 (CDCH…VCTS). Residues N1717, N1734, N1777, N1806, N1839, N1875, N1969, N1984, and N2048 are each glycosylated (N-linked (GlcNAc...) asparagine). Residues 2061–2084 (EAVSKMLGSEGSESGDANEESLRS) form a disordered region. N2091, N2193, N2369, and N2479 each carry an N-linked (GlcNAc...) asparagine glycan. Laminin G-like domains follow at residues 2467–2644 (SQRG…TDGC), 2652–2839 (DKII…IGMC), and 2913–3088 (RYGL…AKAC). Cysteines 2617 and 2644 form a disulfide. N2672 and N2686 each carry an N-linked (GlcNAc...) asparagine glycan. C2814 and C2839 are disulfide-bonded. N-linked (GlcNAc...) asparagine glycans are attached at residues N2932, N2959, and N3007. C3058 and C3088 are disulfide-bonded.

As to quaternary structure, laminin is a complex glycoprotein, consisting of three different polypeptide chains (alpha, beta, gamma), which are bound to each other by disulfide bonds into a cross-shaped molecule comprising one long and three short arms with globules at each end.

It is found in the secreted. It localises to the extracellular space. The protein resides in the extracellular matrix. The protein localises to the basement membrane. Binding to cells via a high affinity receptor, laminin is thought to mediate the attachment, migration and organization of cells into tissues during embryonic development by interacting with other extracellular matrix components. Required to assemble a stable basement membrane and for organizing receptor complexes and cytoskeletal components to the proper cell surfaces. During embryogenesis, does not require the presence of collagen type IV in order to associate with cell surfaces, prior to assembly of the prototypical basement membrane. Plays an important role in muscle contraction of the body. Probably plays a distinct role from the related laminin subunit alpha epi-1. The polypeptide is Laminin subunit alpha lam-3 (Caenorhabditis elegans).